The primary structure comprises 365 residues: Forkhead box protein H1 (365 aa).

The segment at 1 to 29 is disordered; the sequence is MGPCSGSRLGPPEAESPSQPPKRRKKRYL. Residues 32-128 constitute a DNA-binding region (fork-head); it reads DKPPYTYLAM…ALRLQNTALC (97 aa). Residues 151–215 form a disordered region; sequence GRPYRPPSPP…TPPLPSSERP (65 aa). Over residues 154–164 the composition is skewed to pro residues; sequence YRPPSPPPPPS. Residues 273 to 354 form an SMAD-interaction domain (SID) region; sequence LWGQLPTSYL…VSHPRDLAAP (82 aa). A Fast/FoxH1 motif 1 (FM1) motif is present at residues 277–281; it reads LPTSY. The Fast/FoxH1 motif 2 (FM2) signature appears at 287–293; the sequence is PNVVMPL. The short motif at 327-348 is the SMAD interaction motif (SIM) element; the sequence is LDALFQGVPPNKSIYDVWVSHP.

Interacts with the MH2 domains of SMAD2 and SMAD3. Ubiquitous.

The protein localises to the nucleus. In terms of biological role, transcriptional activator. Recognizes and binds to the DNA sequence 5'-TGT[GT][GT]ATT-3'. Required for induction of the goosecoid (GSC) promoter by TGF-beta or activin signaling. Forms a transcriptionally active complex containing FOXH1/SMAD2/SMAD4 on a site on the GSC promoter called TARE (TGF-beta/activin response element). This chain is Forkhead box protein H1 (FOXH1), found in Homo sapiens (Human).